The sequence spans 962 residues: Translation initiation factor IF-2 (962 aa).

Disordered stretches follow at residues 122–263, 293–327, and 341–362; these read EVGV…EPAR, TEEV…TRRK, and IAAQ…AKEP. Positions 156-173 are enriched in low complexity; it reads AVEPQTVVPPVAAPAAEV. Residues 188–202 are compositionally biased toward basic and acidic residues; it reads KPPEEKETKVKHAEP. The span at 244 to 256 shows a compositional bias: basic residues; it reads RPKKAKKRRRKKV. Composition is skewed to basic and acidic residues over residues 308–327 and 344–362; these read RPEE…TRRK and QDDR…AKEP. Residues 455–624 form the tr-type G domain; the sequence is RRPPVITVMG…LLQAELLELK (170 aa). Positions 464–471 are G1; the sequence is GHVDHGKT. 464 to 471 is a binding site for GTP; that stretch reads GHVDHGKT. A G2 region spans residues 489–493; that stretch reads GITQH. The tract at residues 510–513 is G3; sequence DTPG. Residues 510 to 514 and 564 to 567 contribute to the GTP site; these read DTPGH and NKVD. The segment at 564–567 is G4; that stretch reads NKVD. A G5 region spans residues 600–602; sequence SAK.

This sequence belongs to the TRAFAC class translation factor GTPase superfamily. Classic translation factor GTPase family. IF-2 subfamily.

The protein resides in the cytoplasm. One of the essential components for the initiation of protein synthesis. Protects formylmethionyl-tRNA from spontaneous hydrolysis and promotes its binding to the 30S ribosomal subunits. Also involved in the hydrolysis of GTP during the formation of the 70S ribosomal complex. The protein is Translation initiation factor IF-2 of Syntrophobacter fumaroxidans (strain DSM 10017 / MPOB).